The primary structure comprises 855 residues: tRNA(Met) cytidine acetyltransferase TmcA (855 aa).

ATP contacts are provided by residues Gln-260, 286–295 (GRGKSALLGI), and Arg-438. The N-acetyltransferase domain maps to 480–663 (PDLRYWFEDP…GEYSVAVIRP (184 aa)). Acetyl-CoA is bound by residues 590-592 (IAT), 597-603 (MRHGLGS), Glu-630, and Arg-637.

It belongs to the RNA cytidine acetyltransferase family. TmcA subfamily.

It is found in the cytoplasm. The catalysed reaction is cytidine(34) in elongator tRNA(Met) + acetyl-CoA + ATP + H2O = N(4)-acetylcytidine(34) in elongator tRNA(Met) + ADP + phosphate + CoA + H(+). In terms of biological role, catalyzes the formation of N(4)-acetylcytidine (ac(4)C) at the wobble position of tRNA(Met), by using acetyl-CoA as an acetyl donor and ATP (or GTP). This Methanopyrus kandleri (strain AV19 / DSM 6324 / JCM 9639 / NBRC 100938) protein is tRNA(Met) cytidine acetyltransferase TmcA.